A 470-amino-acid polypeptide reads, in one-letter code: Nuclear receptor ROR-beta (470 aa).

Residues 18–93 constitute a DNA-binding region (nuclear receptor); it reads VIPCKICGDK…LGMSRDAVKF (76 aa). 2 consecutive NR C4-type zinc fingers follow at residues 21–41 and 57–81; these read CKICGDKSSGIHYGVITCEGC and CPRQRNCLIDRTNRNRCQHCRLQKC. A compositionally biased stretch (basic and acidic residues) spans 104 to 117; sequence LYAEVQKHQQRLQE. The segment at 104-127 is disordered; that stretch reads LYAEVQKHQQRLQEQRQQQSGEAE. The 239-residue stretch at 222 to 460 folds into the NR LBD domain; sequence EIDRIAQNII…TLFPPLYKEL (239 aa). Residues 456–461 carry the AF-2 motif; sequence LYKELF.

The protein belongs to the nuclear hormone receptor family. NR1 subfamily. In terms of assembly, monomer. Interacts with CRX. In terms of tissue distribution, expressed in inner and outer neuroblastic layer as well as in the ganglion cell layer of the developing retina. Expressed in bone marrow osteoprogenitor cells.

It is found in the nucleus. Its subcellular location is the nucleoplasm. In terms of biological role, nuclear receptor that binds DNA as a monomer to ROR response elements (RORE) containing a single core motif half-site 5'-AGGTCA-3' preceded by a short A-T-rich sequence. Considered to have intrinsic transcriptional activity, have some natural ligands such as all-trans retinoic acid (ATRA) and other retinoids which act as inverse agonists repressing the transcriptional activity. Required for normal postnatal development of rod and cone photoreceptor cells. Modulates rod photoreceptors differentiation at least by inducing the transcription factor NRL-mediated pathway. In cone photoreceptor cells, regulates transcription of OPN1SW. Involved in the regulation of the period length and stability of the circadian rhythm. May control cytoarchitectural patterning of neocortical neurons during development. May act in a dose-dependent manner to regulate barrel formation upon innervation of layer IV neurons by thalamocortical axons. May play a role in the suppression of osteoblastic differentiation through the inhibition of RUNX2 transcriptional activity. Functionally, isoform 1 is critical for hindlimb motor control and for the differentiation of amacrine and horizontal cells in the retina. Regulates the expression of PTF1A synergistically with FOXN4. The chain is Nuclear receptor ROR-beta (Rorb) from Mus musculus (Mouse).